We begin with the raw amino-acid sequence, 343 residues long: D-erythrose-4-phosphate dehydrogenase (343 aa).

Residue 12 to 13 (RI) participates in NAD(+) binding. Substrate-binding positions include 154 to 156 (SCT), Arg-200, 213 to 214 (TK), and Arg-236. Cys-155 functions as the Nucleophile in the catalytic mechanism. Asn-318 contributes to the NAD(+) binding site.

This sequence belongs to the glyceraldehyde-3-phosphate dehydrogenase family. Epd subfamily. As to quaternary structure, homotetramer.

Its subcellular location is the cytoplasm. It catalyses the reaction D-erythrose 4-phosphate + NAD(+) + H2O = 4-phospho-D-erythronate + NADH + 2 H(+). It participates in cofactor biosynthesis; pyridoxine 5'-phosphate biosynthesis; pyridoxine 5'-phosphate from D-erythrose 4-phosphate: step 1/5. Its function is as follows. Catalyzes the NAD-dependent conversion of D-erythrose 4-phosphate to 4-phosphoerythronate. In Pseudoalteromonas translucida (strain TAC 125), this protein is D-erythrose-4-phosphate dehydrogenase.